Here is a 237-residue protein sequence, read N- to C-terminus: Ribonuclease PH (237 aa).

Residues arginine 86 and 124–126 each bind phosphate; that span reads GTR.

The protein belongs to the RNase PH family. Homohexameric ring arranged as a trimer of dimers.

The enzyme catalyses tRNA(n+1) + phosphate = tRNA(n) + a ribonucleoside 5'-diphosphate. In terms of biological role, phosphorolytic 3'-5' exoribonuclease that plays an important role in tRNA 3'-end maturation. Removes nucleotide residues following the 3'-CCA terminus of tRNAs; can also add nucleotides to the ends of RNA molecules by using nucleoside diphosphates as substrates, but this may not be physiologically important. Probably plays a role in initiation of 16S rRNA degradation (leading to ribosome degradation) during starvation. The sequence is that of Ribonuclease PH from Shewanella oneidensis (strain ATCC 700550 / JCM 31522 / CIP 106686 / LMG 19005 / NCIMB 14063 / MR-1).